The primary structure comprises 568 residues: Archaeosine synthase subunit alpha (568 aa).

Positions 496–565 constitute a PUA domain; that stretch reads YDALKSYWVK…AKKGVAVKVR (70 aa).

It belongs to the archaeosine synthase type 1 family. Forms a robust complex with the archaeosine synthase beta subunit RaSEA, likely an alpha(2)beta(2) heterotetrameric structure. Formation of this complex highly increases lysine transfer activity.

The catalysed reaction is 7-cyano-7-carbaguanosine(15) in tRNA + L-lysine = 7-N-[(5S)-5-amino-5-carboxypentyl]formamidino-7-deazaguanosine(15) in tRNA. It participates in tRNA modification; archaeosine-tRNA biosynthesis. Its function is as follows. Functions in the biosynthesis of archaeosine, a modified nucleoside present in the dihydrouridine loop (D-loop) of archaeal tRNAs. Catalyzes the addition of L-lysine to the cyano group of 7-cyano-7-deazaguanine (preQ0)-modified tRNAs at position 15, to generate q0kN15-tRNA, a q0N lysine adduct identified as 7-N-[(5S)-5-amino-5-carboxypentyl]formamidino-7-deazaguanosine. This is Archaeosine synthase subunit alpha from Thermococcus kodakarensis (strain ATCC BAA-918 / JCM 12380 / KOD1) (Pyrococcus kodakaraensis (strain KOD1)).